A 60-amino-acid chain; its full sequence is Ribosome-inactivating protein dianthin-32 (60 aa).

Belongs to the ribosome-inactivating protein family. Type 1 RIP subfamily.

It carries out the reaction Endohydrolysis of the N-glycosidic bond at one specific adenosine on the 28S rRNA.. Functionally, single-chain ribosome-inactivating protein. The sequence is that of Ribosome-inactivating protein dianthin-32 from Dianthus caryophyllus (Carnation).